Reading from the N-terminus, the 250-residue chain is Bcl-2-like protein 12 (250 aa).

Residues 24-46 (GEAAGSPVPTPPRSPAQEEPTDF) form a disordered region. Ser29 carries the phosphoserine modification. Phosphothreonine is present on Thr33. Ser37 carries the post-translational modification Phosphoserine. An Omega-N-methylarginine modification is found at Arg60. Phosphoserine is present on residues Ser111, Ser158, Ser159, Ser161, and Ser189. A BH2 motif is present at residues 227 to 238 (WIQAHGGWEGIL).

This sequence belongs to the Bcl-2 family. Expressed mainly in breast, thymus, prostate, fetal liver, colon, placenta, pancreas, small intestine, spinal cord, kidney, and bone marrow and to a lesser extent in many other tissues. Isoform 2 is primarily expressed in skeletal muscle.

The protein is Bcl-2-like protein 12 of Homo sapiens (Human).